A 126-amino-acid chain; its full sequence is 13 kDa ribonucleoprotein-associated protein (126 aa).

Belongs to the eukaryotic ribosomal protein eL8 family. Binds to the C'/D and B/C motifs in U3 snoRNA. Component of the U4/U6-U5 tri-snRNP complex composed of the U4, U6 and U5 snRNAs and at least PRP3, PRP4, PRP6, PRP8, PRP18, PRP31, PRP38, SNU13, SNU23, SNU66, SNU114, SPP381, SMB1, SMD1, SMD2, SMD3, SMX2, SMX3, LSM2, LSM3, LSM4, LSM5, LSM6, LSM7, LSM8, BRR2 and DIB1. Binds to the 5'-stem-loop of U4 snRNA. Component of the ribosomal small subunit (SSU) processome composed of at least 40 protein subunits and snoRNA U3.

The protein resides in the nucleus. The protein localises to the nucleolus. In terms of biological role, common component of the spliceosome and rRNA processing machinery. In association with the spliceosomal U4/U6.U5 tri-snRNP particle, required for splicing of pre-mRNA. In association with box C/D snoRNPs, required for processing of pre-ribosomal RNA (rRNA) and site-specific 2'-O-methylation of substrate RNAs. Essential for the accumulation and stability of U4 snRNA, U6 snRNA, and box C/D snoRNAs. The protein is 13 kDa ribonucleoprotein-associated protein (SNU13) of Saccharomyces cerevisiae (strain ATCC 204508 / S288c) (Baker's yeast).